The following is a 580-amino-acid chain: Tripeptidyl-peptidase sed5 (580 aa).

The tract at residues 1–21 (MYPLDGSARPHPPGTTRLNSV) is disordered. The 387-residue stretch at 181–567 (RAQRLIVAEL…RRTLEELRRI (387 aa)) folds into the Peptidase S53 domain. An N-linked (GlcNAc...) asparagine glycan is attached at N236. Residues E269, D273, and S479 each act as charge relay system in the active site. The Ca(2+) site is built by D523 and I524. The N-linked (GlcNAc...) asparagine glycan is linked to N529. 3 residues coordinate Ca(2+): G543, G545, and D547.

It depends on Ca(2+) as a cofactor.

The protein resides in the secreted. It localises to the extracellular space. It carries out the reaction Release of an N-terminal tripeptide from a polypeptide.. Functionally, secreted tripeptidyl-peptidase which degrades proteins at acidic pHs and is involved in virulence. This is Tripeptidyl-peptidase sed5 (sed5) from Aspergillus fumigatus (strain ATCC MYA-4609 / CBS 101355 / FGSC A1100 / Af293) (Neosartorya fumigata).